The primary structure comprises 554 residues: U4/U6 small nuclear ribonucleoprotein PRP4-like protein (554 aa).

Over residues 48–65 (APIPMMPHPPVARPPTFR) the composition is skewed to pro residues. Positions 48-99 (APIPMMPHPPVARPPTFRPPVSQNGGVKTSDSDSESDDEHIEISEESKQVRE) are disordered. The span at 88-99 (IEISEESKQVRE) shows a compositional bias: basic and acidic residues. 7 WD repeats span residues 253 to 292 (GDDR…NTIA), 296 to 335 (DHKE…LQTF), 337 to 376 (GHLD…ELLL), 379 to 418 (GHSR…SILV), 421 to 460 (GHIK…SLYI), 463 to 503 (AHAN…LVKS), and 506 to 545 (GHES…DEDE).

The protein resides in the nucleus speckle. Its function is as follows. Participates in pre-mRNA splicing. Part of the U4/U5/U6 tri-snRNP complex, one of the building blocks of the spliceosome. Essential for reproduction. In female gametophyte, is necessary for the egg cell and central cell fate determination and hence reproductive success. Involved in a mechanism that prevents accessory cells from adopting gametic cell fate. Modulates egg cell signaling center that regulates the development of all female gametophytic cells. The protein is U4/U6 small nuclear ribonucleoprotein PRP4-like protein of Arabidopsis thaliana (Mouse-ear cress).